The following is a 622-amino-acid chain: Cilia- and flagella-associated protein 206 (622 aa).

Positions 568-593 (NTSQVYPLKEASTQSKREGSSRVPRP) are disordered.

This sequence belongs to the CFAP206 family. As to expression, expressed in the sperm, oviduct, lung, nasal cavity, brain ependyma and choroid plexus.

The protein localises to the cytoplasm. The protein resides in the cytoskeleton. It is found in the cilium axoneme. Its subcellular location is the cilium basal body. Essential for sperm motility and is involved in the regulation of the beating frequency of motile cilia on the epithelial cells of the respiratory tract. Required for the establishment of radial spokes in sperm flagella. The polypeptide is Cilia- and flagella-associated protein 206 (Mus musculus (Mouse)).